The chain runs to 261 residues: Glucose 1-dehydrogenase 2 (261 aa).

An NADP(+)-binding site is contributed by 11-35; the sequence is VVTGGSKGLGRAMAVRFGQEQSKVV. Residue serine 145 coordinates substrate. Residue tyrosine 158 is the Proton acceptor of the active site.

The protein belongs to the short-chain dehydrogenases/reductases (SDR) family. Homotetramer.

The catalysed reaction is D-glucose + NAD(+) = D-glucono-1,5-lactone + NADH + H(+). It carries out the reaction D-glucose + NADP(+) = D-glucono-1,5-lactone + NADPH + H(+). The protein is Glucose 1-dehydrogenase 2 (gdhII) of Priestia megaterium (Bacillus megaterium).